A 56-amino-acid chain; its full sequence is Large ribosomal subunit protein bL33 (56 aa).

This sequence belongs to the bacterial ribosomal protein bL33 family.

In Treponema pallidum (strain Nichols), this protein is Large ribosomal subunit protein bL33 (rpmG).